The sequence spans 91 residues: Putative regulatory protein DSY2730 (91 aa).

Belongs to the RemA family.

This is Putative regulatory protein DSY2730 from Desulfitobacterium hafniense (strain Y51).